The primary structure comprises 91 residues: Putative defective replication initiation protein (91 aa).

The polypeptide is Putative defective replication initiation protein (repA1) (Escherichia coli (strain K12)).